The sequence spans 342 residues: Probable transposase for insertion-like sequence element IS1161 (342 aa).

Residues 182–342 (IEERPEEINN…KKLFELTQTA (161 aa)) form the Integrase catalytic domain.

Belongs to the transposase IS30 family.

In terms of biological role, required for the transposition of the insertion element. The sequence is that of Probable transposase for insertion-like sequence element IS1161 from Streptococcus salivarius.